A 439-amino-acid chain; its full sequence is Homeobox protein ceh-32 (439 aa).

The segment at residues 183–243 (WDGEQKTHCF…KNRRQRDRAA (61 aa)) is a DNA-binding region (homeobox). Disordered stretches follow at residues 253-293 (GVEL…SHIP), 344-365 (EEENSETTVEVEADIEPPKKRS), and 379-439 (VSPS…SQSE). Acidic residues-rich tracts occupy residues 264 to 274 (SDSDDDFEDSM) and 344 to 358 (EEENSETTVEVEADI). Polar residues predominate over residues 379–392 (VSPSQCSPCSNESL). Residues 398–428 (VKTEEVKKEDDEAAEEDSRSVKSETSEDPKH) show a composition bias toward basic and acidic residues.

The protein belongs to the SIX/Sine oculis homeobox family. In terms of assembly, interacts with gmn-1. In terms of tissue distribution, expressed in the posterior gonad. Expressed in some cells in the head that are probably neurons. Expressed in the dorsal and ventral neuron RMD pair and the inner labial neuron class IL1. Not expressed in BAG neurons.

The protein resides in the nucleus. Functionally, transcription factor which binds a motif with the core sequence 5'-GTATCA-3'. Plays a role in head morphogenesis. Involved in embryonic development. Required for cell specification of the RIA interneurons. May cooperate with the transcription factor vab-3 and phosphatase eya-1 to repress transcription factor ets-5 expression in non BAG neuronal cells. In Caenorhabditis elegans, this protein is Homeobox protein ceh-32.